Reading from the N-terminus, the 156-residue chain is 3-hydroxyacyl-[acyl-carrier-protein] dehydratase FabZ (156 aa).

H62 is a catalytic residue.

The protein belongs to the thioester dehydratase family. FabZ subfamily.

It is found in the cytoplasm. The enzyme catalyses a (3R)-hydroxyacyl-[ACP] = a (2E)-enoyl-[ACP] + H2O. Its function is as follows. Involved in unsaturated fatty acids biosynthesis. Catalyzes the dehydration of short chain beta-hydroxyacyl-ACPs and long chain saturated and unsaturated beta-hydroxyacyl-ACPs. This chain is 3-hydroxyacyl-[acyl-carrier-protein] dehydratase FabZ, found in Parasynechococcus marenigrum (strain WH8102).